Consider the following 308-residue polypeptide: UDP-N-acetylenolpyruvoylglucosamine reductase (308 aa).

One can recognise an FAD-binding PCMH-type domain in the interval arginine 24 to glycine 187. The active site involves arginine 167. A disordered region spans residues glutamine 199–alanine 230. Residues leucine 200 to serine 213 are compositionally biased toward basic and acidic residues. Positions alanine 214–glycine 228 are enriched in polar residues. The Proton donor role is filled by serine 216. Glutamate 298 is a catalytic residue.

It belongs to the MurB family. The cofactor is FAD.

It is found in the cytoplasm. The catalysed reaction is UDP-N-acetyl-alpha-D-muramate + NADP(+) = UDP-N-acetyl-3-O-(1-carboxyvinyl)-alpha-D-glucosamine + NADPH + H(+). Its pathway is cell wall biogenesis; peptidoglycan biosynthesis. Functionally, cell wall formation. This Ruegeria pomeroyi (strain ATCC 700808 / DSM 15171 / DSS-3) (Silicibacter pomeroyi) protein is UDP-N-acetylenolpyruvoylglucosamine reductase.